The primary structure comprises 344 residues: Protein pelota homolog (344 aa).

Belongs to the eukaryotic release factor 1 family. Pelota subfamily. Monomer. The cofactor is a divalent metal cation.

The protein localises to the cytoplasm. Its function is as follows. May function in recognizing stalled ribosomes, interact with stem-loop structures in stalled mRNA molecules, and effect endonucleolytic cleavage of the mRNA. May play a role in the release non-functional ribosomes and degradation of damaged mRNAs. Has endoribonuclease activity. In Saccharolobus islandicus (strain Y.N.15.51 / Yellowstone #2) (Sulfolobus islandicus), this protein is Protein pelota homolog.